Consider the following 294-residue polypeptide: Cytidine deaminase (294 aa).

2 CMP/dCMP-type deaminase domains span residues 48–168 and 186–294; these read DEDA…FGPK and VSGD…VLLG. 89–91 is a substrate binding site; that stretch reads NME. Position 102 (H102) interacts with Zn(2+). The Proton donor role is filled by E104. Zn(2+) is bound by residues C129 and C132.

This sequence belongs to the cytidine and deoxycytidylate deaminase family. In terms of assembly, homodimer. Requires Zn(2+) as cofactor.

The enzyme catalyses cytidine + H2O + H(+) = uridine + NH4(+). It carries out the reaction 2'-deoxycytidine + H2O + H(+) = 2'-deoxyuridine + NH4(+). This enzyme scavenges exogenous and endogenous cytidine and 2'-deoxycytidine for UMP synthesis. The protein is Cytidine deaminase of Klebsiella pneumoniae subsp. pneumoniae (strain ATCC 700721 / MGH 78578).